The chain runs to 218 residues: Ohanin-like protein (218 aa).

The first 40 residues, 1-40 (MSPSAGFQFSLYFLQTKKVLWKLTGLCYILLFTLCFFADQ), serve as a signal peptide directing secretion. The propeptide occupies 41–48 (ENGGKALA). A B30.2/SPRY domain is found at 49–155 (SPPGIWKRAD…RIWQTGLWWL (107 aa)). The propeptide occupies 156-218 (RHLETDPGRV…LGGTVSLTTL (63 aa)).

It belongs to the ohanin/vespryn family. In terms of tissue distribution, expressed by the venom gland.

It is found in the secreted. In terms of biological role, neurotoxin that produces dose-dependent hypolocomotion and hyperalgesia in mice. May directly act on the central nervous system, as it is 6500-fold more potent when administered intracerebroventricularly than intraperitoneal. The protein is Ohanin-like protein of Lachesis muta muta (Bushmaster).